The primary structure comprises 952 residues: UvrABC system protein A (952 aa).

38-45 (GLSGSGKS) provides a ligand contact to ATP. The C4-type zinc finger occupies 259-286 (CDKCGFSISELEPRLFSFNSPLGSCSYC). 2 ABC transporter domains span residues 316 to 595 (FKNI…SNSI) and 615 to 944 (GNGK…QYLS). An ATP-binding site is contributed by 647-654 (GVSGSGKS). The C4-type zinc finger occupies 746–772 (CDKCFGDGVIRIEMHFLPDVYVKCEVC).

This sequence belongs to the ABC transporter superfamily. UvrA family. Forms a heterotetramer with UvrB during the search for lesions.

The protein localises to the cytoplasm. In terms of biological role, the UvrABC repair system catalyzes the recognition and processing of DNA lesions. UvrA is an ATPase and a DNA-binding protein. A damage recognition complex composed of 2 UvrA and 2 UvrB subunits scans DNA for abnormalities. When the presence of a lesion has been verified by UvrB, the UvrA molecules dissociate. The sequence is that of UvrABC system protein A from Mycoplasma genitalium (strain ATCC 33530 / DSM 19775 / NCTC 10195 / G37) (Mycoplasmoides genitalium).